Consider the following 62-residue polypeptide: Snaclec aspercetin subunit beta (62 aa).

A disulfide bridge links cysteine 2 with cysteine 13. Residues 9-62 (YEGHCYRVFKPPKDWADAERFCSQQAKGGHLVSIERFGREDFVSNLITKNLQRG) form the C-type lectin domain.

Belongs to the snaclec family. Heterodimer; disulfide-linked. In terms of tissue distribution, expressed by the venom gland.

Its subcellular location is the secreted. In terms of biological role, snaclec that binds to von Willebrand factor (VWF) and induces its interaction with GPIbalpha (GP1BA) (via the vWF A1 domain), resulting in platelet aggregation. Intramuscular and intravenous injections in mice induce a dose-dependent drop in platelet count (thrombocytopenia). Pretreatment by intravenous injection by this protein in mice potentiates the hemorrhagic lesion in the skin provoked by the metalloproteinase BaP1 intradermally injected. This result is not observed when both BaP1 and this protein are injected simultaneously. The sequence is that of Snaclec aspercetin subunit beta from Bothrops asper (Terciopelo).